Here is a 416-residue protein sequence, read N- to C-terminus: MIDRLAMIGVNVKTASREHVARLEKEWEKHLDTIGYASRGTVIIATCNRFEVYLDSPSRLVEDLASSIASPGGEGLVRLQGIDAARHLFRVASGLESQIIGDHEVLGQVRRAWLKSREKGFTTPLLDEVFHRALKTGARVRSESAISSGGVGYSSAAVSLAASLLGGGLDGARVGIVGAGMAAVGIARALCTRWRPRVVAVFNRTPERGWEVAGKCRGVESLVLPLDELAKLINELDALFVAIAGSTNILERGRVERGVSPRVIVDISNPPVTPKVAGRVFHMPEVEEEAKRMMEERLRWIPAAEAIIEEELEALLDALSRRRARESSRSVMRALSILAEREYERTLAGLRNGVDPREAVELALNSYTKKVGGALRRLLEEASDRGQLSLEDIEAILVSEFARIAENSGFKNGSTG.

Substrate is bound by residues 46-49, Ser-97, 102-104, and Gln-108; these read TCNR and DHE. Cys-47 functions as the Nucleophile in the catalytic mechanism. Residue 178-183 participates in NADP(+) binding; the sequence is GAGMAA.

Belongs to the glutamyl-tRNA reductase family. Homodimer.

The catalysed reaction is (S)-4-amino-5-oxopentanoate + tRNA(Glu) + NADP(+) = L-glutamyl-tRNA(Glu) + NADPH + H(+). It participates in porphyrin-containing compound metabolism; protoporphyrin-IX biosynthesis; 5-aminolevulinate from L-glutamyl-tRNA(Glu): step 1/2. Catalyzes the NADPH-dependent reduction of glutamyl-tRNA(Glu) to glutamate 1-semialdehyde (GSA). The protein is Glutamyl-tRNA reductase of Aeropyrum pernix (strain ATCC 700893 / DSM 11879 / JCM 9820 / NBRC 100138 / K1).